The following is a 188-amino-acid chain: Ribosome hibernation promotion factor (188 aa).

The interval 93 to 125 is disordered; that stretch reads KTRVNRKKRKESEHEPFPATPETPPETAVDHDK.

The protein belongs to the HPF/YfiA ribosome-associated protein family. Long HPF subfamily. Interacts with 100S ribosomes.

Its subcellular location is the cytoplasm. In terms of biological role, required for dimerization of active 70S ribosomes into 100S ribosomes in stationary phase; 100S ribosomes are translationally inactive and sometimes present during exponential growth. The chain is Ribosome hibernation promotion factor from Staphylococcus carnosus (strain TM300).